We begin with the raw amino-acid sequence, 258 residues long: Imidazole glycerol phosphate synthase subunit HisF (258 aa).

Active-site residues include aspartate 11 and aspartate 130.

Belongs to the HisA/HisF family. Heterodimer of HisH and HisF.

It localises to the cytoplasm. It catalyses the reaction 5-[(5-phospho-1-deoxy-D-ribulos-1-ylimino)methylamino]-1-(5-phospho-beta-D-ribosyl)imidazole-4-carboxamide + L-glutamine = D-erythro-1-(imidazol-4-yl)glycerol 3-phosphate + 5-amino-1-(5-phospho-beta-D-ribosyl)imidazole-4-carboxamide + L-glutamate + H(+). It participates in amino-acid biosynthesis; L-histidine biosynthesis; L-histidine from 5-phospho-alpha-D-ribose 1-diphosphate: step 5/9. Its function is as follows. IGPS catalyzes the conversion of PRFAR and glutamine to IGP, AICAR and glutamate. The HisF subunit catalyzes the cyclization activity that produces IGP and AICAR from PRFAR using the ammonia provided by the HisH subunit. This is Imidazole glycerol phosphate synthase subunit HisF from Baumannia cicadellinicola subsp. Homalodisca coagulata.